The chain runs to 313 residues: Protoheme IX farnesyltransferase (313 aa).

8 helical membrane passes run 32–52 (VMSL…GDFH), 53–73 (PVLA…AGAL), 120–140 (ILVN…YVVI), 153–173 (IVIG…AVTG), 180–200 (LLLF…LALF), 226–246 (ILLY…LGYF), 248–268 (AIYG…ALRV), and 284–304 (LFKF…LEVV).

It belongs to the UbiA prenyltransferase family. Protoheme IX farnesyltransferase subfamily.

It localises to the cell inner membrane. The enzyme catalyses heme b + (2E,6E)-farnesyl diphosphate + H2O = Fe(II)-heme o + diphosphate. It functions in the pathway porphyrin-containing compound metabolism; heme O biosynthesis; heme O from protoheme: step 1/1. Functionally, converts heme B (protoheme IX) to heme O by substitution of the vinyl group on carbon 2 of heme B porphyrin ring with a hydroxyethyl farnesyl side group. The polypeptide is Protoheme IX farnesyltransferase (Rhodopseudomonas palustris (strain HaA2)).